Here is a 352-residue protein sequence, read N- to C-terminus: Carbohydrate sulfotransferase 11 (352 aa).

Residues 1–16 lie on the Cytoplasmic side of the membrane; that stretch reads MKQTILDLMRMSRICR. A helical; Signal-anchor for type II membrane protein membrane pass occupies residues 17-37; that stretch reads MVLATCLGSFILVIFYFQSMF. At 38–352 the chain is on the lumenal side; sequence QPVMRRNPFA…YSIPSYLKLQ (315 aa). 3'-phosphoadenylyl sulfate is bound by residues 124–130 and 186–194; these read PKVACTN and REPFERLVS. N-linked (GlcNAc...) asparagine glycans are attached at residues Asn-205, Asn-223, Asn-321, and Asn-342.

Belongs to the sulfotransferase 2 family.

The protein localises to the golgi apparatus membrane. It carries out the reaction chondroitin beta-D-glucuronate + n 3'-phosphoadenylyl sulfate = chondroitin 4'-sulfate + n adenosine 3',5'-bisphosphate + n H(+). Functionally, catalyzes the transfer of sulfate to position 4 of the N-acetylgalactosamine (GalNAc) residue of chondroitin. This is Carbohydrate sulfotransferase 11 (chst11) from Danio rerio (Zebrafish).